The primary structure comprises 453 residues: MSPQTETKAGVGFKAGVKEYKLTYYTPEYETKDTDILAAFRVTPQPGVPPEERGAAVAAESSTGTWTTVWTDGLTSLDRYKGRCYHIEPVPGEEEQFIAYVAYPLDLFEEGSVTNMFTSIVGNVFGFKALRALRLEDLRIPVAYVKTFQGPPHGIQVERDKLNKYGRPLLGCTIKPKLGLSAKNYGRAVYECLRGGLDFTKDDENVNSQPFMRWRDRFLFCAEAIYKSQAETGEIKGHYLNATAGTCEEMIKRAVFARELGVPIVMHDYLTGGFTANTTLSHYCRDNGLLLHIHRAMHAVIDRQKNHGMHFRVLAKALRMSGGDHIHSGTVVGKLEGERDITLGFVDLLRDDYIEKDRSRGIYFTQDWVSLPGVLPVASRGIHVWHMPALTEIFGDDSVLQFGGGTLGHPWGNAPGAVANRVALEACVKARNEGRDLAVEGGEIIREACKWSP.

A propeptide spanning residues 1–2 is cleaved from the precursor; that stretch reads MS. P3 is modified (N-acetylproline). Position 14 is an N6,N6,N6-trimethyllysine (K14). N123 and T173 together coordinate substrate. K175 acts as the Proton acceptor in catalysis. Position 177 (K177) interacts with substrate. The Mg(2+) site is built by K201, D203, and E204. An N6-carboxylysine modification is found at K201. The active-site Proton acceptor is the H294. R295, H327, and S379 together coordinate substrate.

The protein belongs to the RuBisCO large chain family. Type I subfamily. Heterohexadecamer of 8 large chains and 8 small chains; disulfide-linked. The disulfide link is formed within the large subunit homodimers. The cofactor is Mg(2+). In terms of processing, the disulfide bond which can form in the large chain dimeric partners within the hexadecamer appears to be associated with oxidative stress and protein turnover.

The protein localises to the plastid. Its subcellular location is the chloroplast. The enzyme catalyses 2 (2R)-3-phosphoglycerate + 2 H(+) = D-ribulose 1,5-bisphosphate + CO2 + H2O. It carries out the reaction D-ribulose 1,5-bisphosphate + O2 = 2-phosphoglycolate + (2R)-3-phosphoglycerate + 2 H(+). Functionally, ruBisCO catalyzes two reactions: the carboxylation of D-ribulose 1,5-bisphosphate, the primary event in carbon dioxide fixation, as well as the oxidative fragmentation of the pentose substrate in the photorespiration process. Both reactions occur simultaneously and in competition at the same active site. The protein is Ribulose bisphosphate carboxylase large chain of Galium aparine (Catchweed bedstraw).